The chain runs to 119 residues: Protein TusC (119 aa).

The protein belongs to the DsrF/TusC family. As to quaternary structure, heterohexamer, formed by a dimer of trimers. The hexameric TusBCD complex contains 2 copies each of TusB, TusC and TusD. The TusBCD complex interacts with TusE.

The protein localises to the cytoplasm. Its function is as follows. Part of a sulfur-relay system required for 2-thiolation of 5-methylaminomethyl-2-thiouridine (mnm(5)s(2)U) at tRNA wobble positions. The chain is Protein TusC from Klebsiella pneumoniae (strain 342).